The primary structure comprises 196 residues: Zinc finger C2H2 protein ECU03_0940 (196 aa).

C2H2-type zinc fingers lie at residues 130 to 155 (YACEIEGCNKKYTSSFGLKYHMKEGH) and 166 to 191 (YVCPFSGCDKKYKNNNGLKYHIKHYH).

This chain is Zinc finger C2H2 protein ECU03_0940, found in Encephalitozoon cuniculi (strain GB-M1) (Microsporidian parasite).